The sequence spans 396 residues: Phosphoglycerate kinase (396 aa).

Substrate contacts are provided by residues 21–23 (DFN), Arg36, 59–62 (HLGK), Arg119, and Arg156. ATP contacts are provided by residues Lys206, Glu325, and 352–355 (GGDS).

The protein belongs to the phosphoglycerate kinase family. As to quaternary structure, monomer.

It localises to the cytoplasm. It catalyses the reaction (2R)-3-phosphoglycerate + ATP = (2R)-3-phospho-glyceroyl phosphate + ADP. Its pathway is carbohydrate degradation; glycolysis; pyruvate from D-glyceraldehyde 3-phosphate: step 2/5. The sequence is that of Phosphoglycerate kinase from Staphylococcus haemolyticus (strain JCSC1435).